A 145-amino-acid chain; its full sequence is MHPAHLLVLLAVCVSLLGASDIPPLPLNLVQFGKMIECAIRNRRPALDFMNYGCYCGKGGSGTPVDDLDRCCQVHDECYAEAEKHGCYPSLTTYTWECRQVGPYCNSKTQCEVFVCACDFAAAKCFAQEDYNPAHSNINTGERCK.

The first 27 residues, 1–27 (MHPAHLLVLLAVCVSLLGASDIPPLPL), serve as a signal peptide directing secretion. Disulfide bonds link Cys-38/Cys-98, Cys-54/Cys-144, Cys-56/Cys-72, Cys-71/Cys-125, Cys-78/Cys-118, Cys-87/Cys-111, and Cys-105/Cys-116.

Belongs to the phospholipase A2 family. Group I subfamily. D49 sub-subfamily. As to quaternary structure, heterotrimer of alpha, beta, and gamma chains; non-covalently linked. In terms of tissue distribution, expressed by the venom gland.

The protein localises to the secreted. Functionally, heterotrimer: Snake venom phospholipase A2 (PLA2) heterotrimer that acts as a potent presynaptic neurotoxin by blocking synaptic transmission and synaptic vesicle recycling. May act by binding in a calcium-dependent fashion to neurotonal pentraxin-1 (NPTX1) and neurotonal pentraxin-2 (NPTX2), but not to neuronal pentraxin receptor (NPTXR). Also binds to taipoxin-associated calcium binding protein 49 (RCN2), a protein localized in the lumen of endoplasmic reticulum. Its function is as follows. Monomer (beta chain): Snake venom phospholipase A2 homolog that is neither toxic nor enzymatically active. Does not bind calcium. This is Neutral phospholipase A2 homolog taipoxin beta chain 1 from Oxyuranus scutellatus scutellatus (Australian taipan).